Here is a 246-residue protein sequence, read N- to C-terminus: Probable transcriptional regulatory protein GWCH70_2524 (246 aa).

This sequence belongs to the TACO1 family.

It localises to the cytoplasm. The sequence is that of Probable transcriptional regulatory protein GWCH70_2524 from Geobacillus sp. (strain WCH70).